Here is a 475-residue protein sequence, read N- to C-terminus: UDP-N-acetylmuramate--L-alanine ligase (475 aa).

Residue 114-120 (GTHGKTT) coordinates ATP.

This sequence belongs to the MurCDEF family.

Its subcellular location is the cytoplasm. It catalyses the reaction UDP-N-acetyl-alpha-D-muramate + L-alanine + ATP = UDP-N-acetyl-alpha-D-muramoyl-L-alanine + ADP + phosphate + H(+). It participates in cell wall biogenesis; peptidoglycan biosynthesis. Functionally, cell wall formation. The sequence is that of UDP-N-acetylmuramate--L-alanine ligase from Bartonella henselae (strain ATCC 49882 / DSM 28221 / CCUG 30454 / Houston 1) (Rochalimaea henselae).